The chain runs to 308 residues: Elongation factor Ts (308 aa).

The segment at 80–83 is involved in Mg(2+) ion dislocation from EF-Tu; that stretch reads TDFV.

It belongs to the EF-Ts family.

It localises to the cytoplasm. Associates with the EF-Tu.GDP complex and induces the exchange of GDP to GTP. It remains bound to the aminoacyl-tRNA.EF-Tu.GTP complex up to the GTP hydrolysis stage on the ribosome. This chain is Elongation factor Ts, found in Rhizobium leguminosarum bv. trifolii (strain WSM2304).